Reading from the N-terminus, the 427-residue chain is Enolase (427 aa).

Q163 serves as a coordination point for (2R)-2-phosphoglycerate. The active-site Proton donor is the E205. Positions 242, 285, and 312 each coordinate Mg(2+). Residues K337, R366, S367, and K388 each coordinate (2R)-2-phosphoglycerate. The active-site Proton acceptor is the K337.

This sequence belongs to the enolase family. It depends on Mg(2+) as a cofactor.

The protein resides in the cytoplasm. It localises to the secreted. It is found in the cell surface. It carries out the reaction (2R)-2-phosphoglycerate = phosphoenolpyruvate + H2O. Its pathway is carbohydrate degradation; glycolysis; pyruvate from D-glyceraldehyde 3-phosphate: step 4/5. Catalyzes the reversible conversion of 2-phosphoglycerate (2-PG) into phosphoenolpyruvate (PEP). It is essential for the degradation of carbohydrates via glycolysis. This chain is Enolase, found in Beijerinckia indica subsp. indica (strain ATCC 9039 / DSM 1715 / NCIMB 8712).